The primary structure comprises 583 residues: MVRPADSSVDAQRAREQFLSAGALQPDAVAPSVLNSWQRSRELQVHPDRVDLPYLRDPDTDTPLMHAAAPVLRRIAEDLSDQAVSVVLTSADGLVLDRIAADTEFERILDDVRLARGYSYAEEFAGTNGIGTALETGQPAFIRGSEHYVGTLGGLACAGSPIREPVTRRILGVVDLTCWARQADPLLFVLAKSAGSQIEDRLRTMNNETETALLDAYLKQSRRYPGGVLAIGGDVVLMNRYLRQALDAADQTVLLDHAAELTRSSFTSTTVAQLPSGASVKISAAERIMVGVRGDSVVLHVSVHVAESIPVRGSQHIPRLAGRSSSFRRSAHQVERCYRDREWVVIEGEKGSGRTHLGYSVARFVTPEKTIPVLRIGDFETPESFVAAFDSETDDADFAVIVADVDELPDEVLHPLAAVMQTRAGRGWIAATTSAERDSQLVDMLMLPFFIHTVTVPALRHRIEDLHELVPMLLNELSRGEARMDAEAMRQLAKLPWPGNIAQLRHVLTETLRRQRSGVIGADKLPSECRSVTRRKLTRLEAMERDAIVRSLLENDGNKAEAAEALGMSRATIYRKIKDFGIA.

Residues 320 to 513 (LAGRSSSFRR…LRHVLTETLR (194 aa)) form the Sigma-54 factor interaction domain. Residues 348 to 355 (GEKGSGRT) and 395 to 404 (DADFAVIVAD) each bind ATP.

Functionally, acts as a transcriptional activator of the mimABCD operon encoding the propane 2-monooxygenase complex. The chain is Propane 2-monooxygenase operon transcriptional activator MimR from Mycolicibacterium goodii (Mycobacterium goodii).